A 122-amino-acid polypeptide reads, in one-letter code: UPF0102 protein xcc-b100_3645 (122 aa).

This sequence belongs to the UPF0102 family.

The polypeptide is UPF0102 protein xcc-b100_3645 (Xanthomonas campestris pv. campestris (strain B100)).